Reading from the N-terminus, the 292-residue chain is Zinc finger protein SNAI3 (292 aa).

Residues 1–20 (MPRSFLVKTHSSHRVPNYRR) are SNAG domain. 4 consecutive C2H2-type zinc fingers follow at residues 152-174 (FECF…RQLH), 183-205 (FTCK…IRTH), 209-231 (CTCK…VRTH), and 237-259 (YACS…LQTH). A C2H2-type 5; degenerate zinc finger spans residues 265–287 (YRCRRCTKTFSRMSLLARHEESG).

This sequence belongs to the snail C2H2-type zinc-finger protein family.

The protein localises to the nucleus. In terms of biological role, seems to inhibit myoblast differentiation. Transcriptional repressor of E-box-dependent transactivation of downstream myogenic bHLHs genes. Binds preferentially to the canonical E-box sequences 5'-CAGGTG-3' and 5'-CACCTG-3'. The sequence is that of Zinc finger protein SNAI3 (SNAI3) from Homo sapiens (Human).